Reading from the N-terminus, the 1548-residue chain is UDP-glucose:glycoprotein glucosyltransferase (1548 aa).

Residues 1–22 (MLRAVALCVSVVLIALYTPTSG) form the signal peptide. A glycan (N-linked (GlcNAc...) asparagine) is linked at Asn181. The segment covering 243-253 (TEYKSQDDAPK) has biased composition (basic and acidic residues). The segment at 243-265 (TEYKSQDDAPKPEAGSTSDEDLA) is disordered. N-linked (GlcNAc...) asparagine glycans are attached at residues Asn266 and Asn864. Residues 1227-1548 (SANQAATDED…PSHEPKHGEL (322 aa)) are glucosyltransferase. The span at 1512–1523 (EDHENSHSRDSA) shows a compositional bias: basic and acidic residues. Positions 1512–1548 (EDHENSHSRDSAVDDSVDDSVEVTTVTPSHEPKHGEL) are disordered. Positions 1545 to 1548 (HGEL) match the Prevents secretion from ER motif.

Belongs to the glycosyltransferase 8 family. As to quaternary structure, monomer. May interact with CG7484/Sep15. It depends on Ca(2+) as a cofactor. The cofactor is Mn(2+).

Its subcellular location is the endoplasmic reticulum lumen. The protein resides in the endoplasmic reticulum-Golgi intermediate compartment. It carries out the reaction N(4)-(alpha-D-Man-(1-&gt;2)-alpha-D-Man-(1-&gt;2)-alpha-D-Man-(1-&gt;3)-[alpha-D-Man-(1-&gt;2)-alpha-D-Man-(1-&gt;3)-[alpha-D-Man-(1-&gt;2)-alpha-D-Man-(1-&gt;6)]-alpha-D-Man-(1-&gt;6)]-beta-D-Man-(1-&gt;4)-beta-D-GlcNAc-(1-&gt;4)-beta-D-GlcNAc)-L-asparaginyl-[protein] (N-glucan mannose isomer 9A1,2,3B1,2,3) + UDP-alpha-D-glucose = N(4)-(alpha-D-Glc-(1-&gt;3)-alpha-D-Man-(1-&gt;2)-alpha-D-Man-(1-&gt;2)-alpha-D-Man-(1-&gt;3)-[alpha-D-Man-(1-&gt;2)-alpha-D-Man-(1-&gt;3)-[alpha-D-Man-(1-&gt;2)-alpha-D-Man-(1-&gt;6)]-alpha-D-Man-(1-&gt;6)]-beta-D-Man-(1-&gt;4)-beta-D-GlcNAc-(1-&gt;4)-beta-D-GlcNAc)-L-asparaginyl-[protein] + UDP + H(+). The protein operates within protein modification; protein glycosylation. Recognizes glycoproteins with minor folding defects. Reglucosylates single N-glycans near the misfolded part of the protein, thus providing quality control for protein folding in the endoplasmic reticulum. Reglucosylated proteins are recognized by calreticulin for recycling to the endoplasmic reticulum and refolding or degradation. The protein is UDP-glucose:glycoprotein glucosyltransferase of Drosophila melanogaster (Fruit fly).